A 307-amino-acid chain; its full sequence is MIKKRSILIVTRKSPLALWQAEFVKQQIENSHPHLACQILGCTTQGDRLTTEKLVDSGGKDLFVKDLQKALLNRDADIAVHSIKDMSACDGPELMVGAFIRREDPRDVLIVKGELSTLPPHAVIGTSSPRRQCQLKKFQPGCKIKEIRGNVGTRLAKLDAGHYEAIVLAAAGLKRLGLENRIHYYFDPHEFIPAIGQGAIGVECRSDDHEMQTLLKSLDHRETRLCVTAERAVNEKLGGDCFTPIAAHAIIKNDQLSLFAMLGKIDGRVIIRATEIGNSEEAQRIGFKVASQLLEQGGDSLLRELKQ.

Position 241 is an S-(dipyrrolylmethanemethyl)cysteine (cysteine 241).

It belongs to the HMBS family. As to quaternary structure, monomer. Dipyrromethane is required as a cofactor.

It carries out the reaction 4 porphobilinogen + H2O = hydroxymethylbilane + 4 NH4(+). It functions in the pathway porphyrin-containing compound metabolism; protoporphyrin-IX biosynthesis; coproporphyrinogen-III from 5-aminolevulinate: step 2/4. Its function is as follows. Tetrapolymerization of the monopyrrole PBG into the hydroxymethylbilane pre-uroporphyrinogen in several discrete steps. This chain is Porphobilinogen deaminase, found in Coxiella burnetii (strain CbuK_Q154) (Coxiella burnetii (strain Q154)).